Consider the following 1175-residue polypeptide: Double-stranded RNA-specific adenosine deaminase (1175 aa).

2 positions are modified to asymmetric dimethylarginine: Arg30 and Arg42. The Z-binding 1 domain occupies 135 to 201 (LSISQNPEQK…GKPPLWSLVP (67 aa)). The tract at residues 135–204 (LSISQNPEQK…PLWSLVPLSQ (70 aa)) is interaction with Z-DNA. The disordered stretch occupies residues 207–239 (TQPPRAVNSDKEVPRGEPDLDSEDGDPASDLEG). Residues 214–224 (NSDKEVPRGEP) show a composition bias toward basic and acidic residues. Positions 225 to 235 (DLDSEDGDPAS) are enriched in acidic residues. Ser228 and Ser235 each carry phosphoserine. Residues 243-307 (LLDMAEIKEK…ATPPIWYLTD (65 aa)) form the Z-binding 2 domain. Residues 315–384 (MKRSTHSGPA…ARPGPVRLRP (70 aa)) form a disordered region. Basic and acidic residues predominate over residues 357 to 376 (KRVENGQEPVTKYESRHEAR). Lys368 is covalently cross-linked (Glycyl lysine isopeptide (Lys-Gly) (interchain with G-Cter in SUMO); alternate). Lys368 is covalently cross-linked (Glycyl lysine isopeptide (Lys-Gly) (interchain with G-Cter in SUMO1); alternate). Residue Lys368 forms a Glycyl lysine isopeptide (Lys-Gly) (interchain with G-Cter in SUMO2); alternate linkage. Residue Ser431 is modified to Phosphoserine. Positions 453 to 521 (NPVSGLLEYA…AVKAMAILLR (69 aa)) constitute a DRBM 1 domain. A disordered region spans residues 524-561 (KAKDSGQPEELSNCPMEEDPEKPAESQPPSSSATSLFS). Residues 550-561 (QPPSSSATSLFS) are compositionally biased toward polar residues. Phosphoserine occurs at positions 564, 579, and 586. The 69-residue stretch at 564 to 632 (SPVTTLLECM…AEEAMKALQE (69 aa)) folds into the DRBM 2 domain. The tract at residues 632–652 (EEAANSADDQSGGANTDSLDE) is disordered. The span at 638–648 (ADDQSGGANTD) shows a compositional bias: polar residues. The tract at residues 662–671 (IGELVRYLNT) is N-terminal extension of DRBM 3 and constituent of a bi-partite nuclear localization signal. One can recognise a DRBM 3 domain in the interval 672–740 (NPVGGLLEYA…ADAALRVLIG (69 aa)). Residues 741-747 (ESEKAEQ) are C-terminal extension of DRBM 3 and constituent of a bi-partite nuclear localization signal. The residue at position 754 (Thr754) is a Phosphothreonine. 3 positions are modified to phosphoserine: Ser760, Ser769, and Ser771. Residue Lys821 forms a Glycyl lysine isopeptide (Lys-Gly) (interchain with G-Cter in SUMO2) linkage. The 336-residue stretch at 832-1167 (SLGTGNRCVK…ISKPQEEKNF (336 aa)) folds into the A to I editase domain. His856 provides a ligand contact to Zn(2+). Catalysis depends on Glu858, which acts as the Proton donor. Residues Cys912 and Cys982 each contribute to the Zn(2+) site.

As to quaternary structure, homodimer. Homodimerization is essential for its catalytic activity. Isoform 5 can form heterodimers with ADARB1/ADAR2. Isoform 1 interacts with ILF2/NF45 and ILF3/NF90. Binding to ILF3/NF90 up-regulates ILF3-mediated gene expression. Isoform 1 and isoform 5 (via DRBM 3 domain) interact with TNPO1. Isoform 5 (via DRBM domains) interacts with XPO5. Isoform 1 and isoform 5 can interact with EIF2AK2/PKR and UPF1. Post-translationally, sumoylation reduces RNA-editing activity. As to expression, detected in brain.

The protein localises to the cytoplasm. It localises to the nucleus. It carries out the reaction adenosine in double-stranded RNA + H2O + H(+) = inosine in double-stranded RNA + NH4(+). Functionally, catalyzes the hydrolytic deamination of adenosine to inosine in double-stranded RNA (dsRNA) referred to as A-to-I RNA editing. This may affect gene expression and function in a number of ways that include mRNA translation by changing codons and hence the amino acid sequence of proteins; pre-mRNA splicing by altering splice site recognition sequences; RNA stability by changing sequences involved in nuclease recognition; genetic stability in the case of RNA virus genomes by changing sequences during viral RNA replication; and RNA structure-dependent activities such as microRNA production or targeting or protein-RNA interactions. Can edit both viral and cellular RNAs and can edit RNAs at multiple sites (hyper-editing) or at specific sites (site-specific editing). Its cellular RNA substrates include: bladder cancer-associated protein (BLCAP), neurotransmitter receptors for glutamate (GRIA2) and serotonin (HTR2C) and GABA receptor (GABRA3). Site-specific RNA editing of transcripts encoding these proteins results in amino acid substitutions which consequently alters their functional activities. Exhibits low-level editing at the GRIA2 Q/R site, but edits efficiently at the R/G site and HOTSPOT1. Does not affect polyomavirus replication but provides protection against virus-induced cytopathic effects. Essential for embryonic development and cell survival and plays a critical role in the maintenance of hematopoietic stem cells. This chain is Double-stranded RNA-specific adenosine deaminase (Adar), found in Rattus norvegicus (Rat).